Here is a 140-residue protein sequence, read N- to C-terminus: Lymphocyte antigen 6L (140 aa).

An N-terminal signal peptide occupies residues 1–20; it reads MAPLLLVLWASLVSMELTGG. One can recognise a UPAR/Ly6 domain in the interval 31-124; that stretch reads LSCFECFKVL…GSWEGFWSLP (94 aa). 2 disulfide bridges follow: C33/C50 and C105/C110. Residue S116 is the site of GPI-anchor amidated serine attachment. Residues 117-140 constitute a propeptide, removed in mature form; it reads WEGFWSLPGRLLLPMGLGLFCTLL.

The protein resides in the cell membrane. The sequence is that of Lymphocyte antigen 6L from Mus musculus (Mouse).